We begin with the raw amino-acid sequence, 196 residues long: MTSFYIMLLAAYLIGAIPTGVVLTRLVGASDIRNSGSGNIGATNVYRVAGKKLGVLTLIGDALKGAVPVLIAIKLTDLGDAQVGAVAAAAFIGHCYPVYLKFKGGKGVATALGIFLVLSPLAVLGAFAVFALLVWKWRYVSLGSICAAAAIPILVYFTEGNPALVATTMFISLIVICRHHQNIQRLLNGSENRFKA.

The next 5 membrane-spanning stretches (helical) occupy residues 4-24 (FYIMLLAAYLIGAIPTGVVLT), 53-73 (LGVLTLIGDALKGAVPVLIAI), 78-98 (LGDAQVGAVAAAAFIGHCYPV), 114-134 (IFLVLSPLAVLGAFAVFALLV), and 140-160 (VSLGSICAAAAIPILVYFTEG).

The protein belongs to the PlsY family. In terms of assembly, probably interacts with PlsX.

It is found in the cell inner membrane. The enzyme catalyses an acyl phosphate + sn-glycerol 3-phosphate = a 1-acyl-sn-glycero-3-phosphate + phosphate. The protein operates within lipid metabolism; phospholipid metabolism. Functionally, catalyzes the transfer of an acyl group from acyl-phosphate (acyl-PO(4)) to glycerol-3-phosphate (G3P) to form lysophosphatidic acid (LPA). This enzyme utilizes acyl-phosphate as fatty acyl donor, but not acyl-CoA or acyl-ACP. This Syntrophotalea carbinolica (strain DSM 2380 / NBRC 103641 / GraBd1) (Pelobacter carbinolicus) protein is Glycerol-3-phosphate acyltransferase.